Reading from the N-terminus, the 421-residue chain is D-amino acid dehydrogenase (421 aa).

Residue 3 to 17 coordinates FAD; the sequence is VLVLGGGVVGVASAY.

Belongs to the DadA oxidoreductase family. FAD is required as a cofactor.

The enzyme catalyses a D-alpha-amino acid + A + H2O = a 2-oxocarboxylate + AH2 + NH4(+). It functions in the pathway amino-acid degradation; D-alanine degradation; NH(3) and pyruvate from D-alanine: step 1/1. Oxidative deamination of D-amino acids. This Methylobacterium nodulans (strain LMG 21967 / CNCM I-2342 / ORS 2060) protein is D-amino acid dehydrogenase.